Consider the following 313-residue polypeptide: Pyrimidine-specific ribonucleoside hydrolase RihB (313 aa).

Aspartate 11 functions as the Proton acceptor in the catalytic mechanism. Residues aspartate 11, aspartate 16, and valine 124 each coordinate Ca(2+). Substrate-binding residues include glutamine 227 and histidine 239. A Ca(2+)-binding site is contributed by aspartate 240.

It belongs to the IUNH family. RihB subfamily. In terms of assembly, homotetramer. Ca(2+) is required as a cofactor.

It catalyses the reaction a pyrimidine ribonucleoside + H2O = a pyrimidine nucleobase + D-ribose. Its function is as follows. Hydrolyzes cytidine or uridine to ribose and cytosine or uracil, respectively. Has a clear preference for cytidine over uridine. Strictly specific for ribonucleosides. The protein is Pyrimidine-specific ribonucleoside hydrolase RihB of Shigella sonnei (strain Ss046).